Here is a 166-residue protein sequence, read N- to C-terminus: UPF0134 protein MPN_138 (166 aa).

The protein belongs to the UPF0134 family.

The chain is UPF0134 protein MPN_138 from Mycoplasma pneumoniae (strain ATCC 29342 / M129 / Subtype 1) (Mycoplasmoides pneumoniae).